Reading from the N-terminus, the 102-residue chain is Putative sortase YwpE (102 aa).

The Proton donor/acceptor role is filled by H17. C78 serves as the catalytic Acyl-thioester intermediate.

This sequence belongs to the bacterial sortase family.

In terms of biological role, seems not to play a major role if any as a sortase. In Bacillus subtilis (strain 168), this protein is Putative sortase YwpE (ywpE).